The primary structure comprises 413 residues: Multidrug resistance protein MdtA (413 aa).

Positions 1–20 (MKGSNTFRWAIAIGVVVAAA) are cleaved as a signal peptide. Disordered stretches follow at residues 31–57 (SPTA…RDGP) and 391–413 (EPQT…GARA). Residues 32–49 (PTAAPGVAAQAQHTAAAG) show a composition bias toward low complexity. Positions 397–413 (ADEKSPSRHEGQKGARA) are enriched in basic and acidic residues.

This sequence belongs to the membrane fusion protein (MFP) (TC 8.A.1) family. Part of a tripartite efflux system composed of MdtA, MdtB and MdtC.

It is found in the cell inner membrane. The sequence is that of Multidrug resistance protein MdtA from Salmonella typhi.